We begin with the raw amino-acid sequence, 391 residues long: Zinc finger protein DPF3 (391 aa).

The span at 152–165 shows a compositional bias: acidic residues; the sequence is ENGDGFHDDEDFEV. Disordered regions lie at residues 152 to 200 and 236 to 266; these read ENGD…PYVC and LAEE…QKAP. Basic residues predominate over residues 169–183; it reads KRKHRNKGRGRGSGR. The C2H2-type zinc-finger motif lies at 198–235; it reads YVCDNRYKQKHNSKTADSVCGKRYKNRPGLSYHYAHTH. PHD-type zinc fingers lie at residues 273-333 and 330-380; these read NDYC…CKSC and CKSC…CQNL.

As to quaternary structure, component of the BAF complex. Interacts with acetylated histones H3 and H4. Component of neuron-specific chromatin remodeling complex (nBAF complex), a subfamily of ATP-dependent SWI/SNF chromatin remodeling complexes. In terms of tissue distribution, expressed in the heart and somites.

The protein localises to the nucleus. In terms of biological role, muscle-specific component of the BAF complex, a multiprotein complex involved in transcriptional activation and repression of select genes by chromatin remodeling (alteration of DNA-nucleosome topology). Specifically binds acetylated lysines on histone 3 and 4. In the complex, it acts as a tissue-specific anchor between histone acetylations and methylations and chromatin remodeling. Belongs to the neuron-specific chromatin remodeling complex (nBAF complex) and may play a role in neural development. Plays an essential role in heart and skeletal muscle development. The protein is Zinc finger protein DPF3 (dpf3) of Danio rerio (Zebrafish).